Consider the following 151-residue polypeptide: MDSPQKVVDHQPFCLSLKCFVKTLRLVVTVASMIFFIVAQAPEPYIVITGFEVTIILFLIALYMCSLDKTMRSFFWPLLDVINSVVTTLFMLIVSVSALIPETSTMIMVGGVFGFLTVICTVADCALMCQKLRFRPHGPYQNRSATDVDDS.

Residues 13–133 (FCLSLKCFVK…DCALMCQKLR (121 aa)) form the MARVEL domain. 4 helical membrane passes run 19-39 (CFVK…FIVA), 45-65 (YIVI…LYMC), 74-94 (FFWP…MLIV), and 107-127 (IMVG…DCAL). Asn142 carries an N-linked (GlcNAc...) asparagine glycan.

The protein belongs to the chemokine-like factor family. In terms of tissue distribution, both isoforms have highest expression levels in testis with relatively lower expression level in liver, spleen, lung, brain and heart and barely detectable levels in skeletal muscle and kidney were barely detected. In most tissues, isoform CKLF2 has higher expression levels than isoform CKLF1.

The protein localises to the secreted. The protein resides in the membrane. May play an important role in inflammation and regeneration of skeletal muscle. Essential for embryonic development. In terms of biological role, has chemotactic response in monocytes, neutrophils and lymphocytes. Binds CCR4. In Rattus norvegicus (Rat), this protein is Chemokine-like factor (Cklf).